A 32-amino-acid polypeptide reads, in one-letter code: Cyclotide Hyfl-B (32 aa).

Positions 1 to 32 (GSPIQCAETCFIGKCYTEELGCTCTAFLCMKN) form a cross-link, cyclopeptide (Gly-Asn). 3 disulfides stabilise this stretch: C6–C22, C10–C24, and C15–C29.

It belongs to the cyclotide family. Moebius subfamily. This is a cyclic peptide.

Its function is as follows. Probably participates in a plant defense mechanism. The polypeptide is Cyclotide Hyfl-B (Hybanthus floribundus (Greenviolet)).